The following is a 210-amino-acid chain: Ion-translocating oxidoreductase complex subunit G (210 aa).

A helical transmembrane segment spans residues 9 to 29; sequence SLVLALFAIAATALVTITYAL. An FMN phosphoryl threonine modification is found at T176.

This sequence belongs to the RnfG family. In terms of assembly, the complex is composed of six subunits: RnfA, RnfB, RnfC, RnfD, RnfE and RnfG. The cofactor is FMN.

It localises to the cell inner membrane. Part of a membrane-bound complex that couples electron transfer with translocation of ions across the membrane. In Aliivibrio fischeri (strain ATCC 700601 / ES114) (Vibrio fischeri), this protein is Ion-translocating oxidoreductase complex subunit G.